Consider the following 712-residue polypeptide: uncharacterized protein (712 aa).

Disordered stretches follow at residues 1 to 46 (MAKI…NNLN), 107 to 264 (NIKP…IPQA), and 370 to 389 (QPQH…QQNQ). 3 stretches are compositionally biased toward low complexity: residues 10–46 (INNS…NNLN), 107–143 (NIKP…SNSS), and 161–173 (TFDN…NSSN). Positions 178–187 (ISPTTSPQLE) are enriched in polar residues. Composition is skewed to low complexity over residues 188–198 (QHQQYQQQQHQ) and 241–264 (PLQQ…IPQA).

This is an uncharacterized protein from Dictyostelium discoideum (Social amoeba).